We begin with the raw amino-acid sequence, 490 residues long: Transmembrane protease serine 2 (490 aa).

Residues 1 to 83 (MALNSGSPPG…ALCTSKSKKS (83 aa)) lie on the Cytoplasmic side of the membrane. The chain crosses the membrane as a helical; Signal-anchor for type II membrane protein span at residues 84 to 104 (LCLALALGTVLTGAAVAAVLL). Residues 105 to 490 (WRFWDSNCST…WIYQQMRANS (386 aa)) lie on the Extracellular side of the membrane. N-linked (GlcNAc...) asparagine glycosylation is present at asparagine 111. The 39-residue stretch at 111-149 (NCSTSEMECGSSGTCISSSLWCDGVAHCPNGEDENRCVR) folds into the LDL-receptor class A domain. Disulfide bonds link cysteine 112–cysteine 125, cysteine 119–cysteine 138, cysteine 132–cysteine 147, cysteine 171–cysteine 230, cysteine 184–cysteine 240, cysteine 243–cysteine 363, cysteine 279–cysteine 295, cysteine 408–cysteine 424, and cysteine 435–cysteine 463. Positions 133, 135, 143, and 144 each coordinate Ca(2+). Positions 150–242 (LYGQSFILQV…RMVVSLRCIE (93 aa)) constitute an SRCR domain. N-linked (GlcNAc...) asparagine glycosylation occurs at asparagine 212. The Peptidase S1 domain maps to 254–487 (IVGGLNASPG…FTDWIYQQMR (234 aa)). Active-site charge relay system residues include histidine 294 and aspartate 343. Serine 439 acts as the Charge relay system in catalysis. An N-linked (GlcNAc...) asparagine glycan is attached at asparagine 474.

Belongs to the peptidase S1 family. The catalytically active form interacts with ACE2. Proteolytically processed; by an autocatalytic mechanism. Autocleavage induces active conformation. As to expression, larynx, trachea and bronchi, lung, prostate and kidney.

The protein localises to the cell membrane. Its subcellular location is the secreted. The enzyme catalyses The enzyme cleaves angiotensin-converting enzyme 2 (EC 3.4.17.23) and cleaves influenzea A and B virus and coronavirus spike glycoproteins at arginine residues.. Its function is as follows. Plasma membrane-anchored serine protease that cleaves at arginine residues. Participates in proteolytic cascades of relevance for the normal physiologic function of the prostate. Androgen-induced TMPRSS2 activates several substrates that include pro-hepatocyte growth factor/HGF, the protease activated receptor-2/F2RL1 or matriptase/ST14 leading to extracellular matrix disruption. In addition, activates trigeminal neurons and contribute to both spontaneous pain and mechanical allodynia. Functionally, (Microbial infection) Essential for spread and pathogenesis of influenza A virus (strains H1N1, H3N2 and H7N9) and is involved in proteolytic cleavage and activation of hemagglutinin (HA) protein which is essential for viral infectivity. This is Transmembrane protease serine 2 (Tmprss2) from Mus musculus (Mouse).